Reading from the N-terminus, the 459-residue chain is Ribulose bisphosphate carboxylase large chain (459 aa).

Positions 1 to 2 (MS) are excised as a propeptide. Pro3 carries the post-translational modification N-acetylproline. Lys14 is modified (N6,N6,N6-trimethyllysine). Residues Xaa123 and Thr173 each coordinate substrate. The active-site Proton acceptor is Lys175. A substrate-binding site is contributed by Lys177. Lys201, Asp203, and Glu204 together coordinate Mg(2+). N6-carboxylysine is present on Lys201. Catalysis depends on His294, which acts as the Proton acceptor. Arg295, His327, and Ser379 together coordinate substrate.

This sequence belongs to the RuBisCO large chain family. Type I subfamily. Heterohexadecamer of 8 large chains and 8 small chains; disulfide-linked. The disulfide link is formed within the large subunit homodimers. Mg(2+) serves as cofactor. In terms of processing, the disulfide bond which can form in the large chain dimeric partners within the hexadecamer appears to be associated with oxidative stress and protein turnover.

The protein resides in the plastid. Its subcellular location is the chloroplast. It carries out the reaction 2 (2R)-3-phosphoglycerate + 2 H(+) = D-ribulose 1,5-bisphosphate + CO2 + H2O. It catalyses the reaction D-ribulose 1,5-bisphosphate + O2 = 2-phosphoglycolate + (2R)-3-phosphoglycerate + 2 H(+). In terms of biological role, ruBisCO catalyzes two reactions: the carboxylation of D-ribulose 1,5-bisphosphate, the primary event in carbon dioxide fixation, as well as the oxidative fragmentation of the pentose substrate in the photorespiration process. Both reactions occur simultaneously and in competition at the same active site. This Corynocarpus laevigatus (New Zealand laurel) protein is Ribulose bisphosphate carboxylase large chain.